The following is a 247-amino-acid chain: Caffeoyl-CoA O-methyltransferase 2 (247 aa).

Lysine 21 is a binding site for substrate. Residues threonine 63, glutamate 85, 87 to 88 (GV), serine 93, aspartate 111, and alanine 140 each bind S-adenosyl-L-methionine. Aspartate 163 is a binding site for substrate. A divalent metal cation is bound at residue aspartate 163. Residue aspartate 165 coordinates S-adenosyl-L-methionine. Aspartate 189 and asparagine 190 together coordinate a divalent metal cation. A substrate-binding site is contributed by asparagine 194.

Belongs to the class I-like SAM-binding methyltransferase superfamily. Cation-dependent O-methyltransferase family. CCoAMT subfamily. It depends on a divalent metal cation as a cofactor.

It catalyses the reaction (E)-caffeoyl-CoA + S-adenosyl-L-methionine = (E)-feruloyl-CoA + S-adenosyl-L-homocysteine + H(+). It functions in the pathway aromatic compound metabolism; phenylpropanoid biosynthesis. Its function is as follows. Methylates caffeoyl-CoA to feruloyl-CoA and 5-hydroxyferuloyl-CoA to sinapoyl-CoA. Plays a role in the synthesis of feruloylated polysaccharides. Involved in the reinforcement of the plant cell wall. Also involved in the responding to wounding or pathogen challenge by the increased formation of cell wall-bound ferulic acid polymers. In Populus trichocarpa (Western balsam poplar), this protein is Caffeoyl-CoA O-methyltransferase 2 (CCOAOMT2).